A 31-amino-acid chain; its full sequence is GYLGGYAAPAIAAAPAIAALPAASSIAANGY.

2 tandem repeats follow at residues 7 to 10 (AAPA) and 13 to 17 (AAPAI).

In terms of biological role, component of the cuticle of migratory locust which contains more than 100 different structural proteins. The sequence is that of Cuticle protein 54 from Locusta migratoria (Migratory locust).